The chain runs to 1039 residues: MVDWVSGVNGKPLKWSQLEGVLSGTYPQEFKLANVGGSGSGSEKIRYYSSQPFAELHAASYYHFLHGANSPQDMVAAACQQGMSALALIDRDGFYGAMEFAEAAATSGLPTVFGAELTLAPDRILTVLARGVEGYTSLSRLITQARMRGSKDVTIYPPLAEIVESMGKNCRFLLNHSWCTDESLLEIFYPDTVVLEYGVTMRPEDVDHHELLDSIRQRYGFMAIASAVPSAVDRVSARVAGAKQALAQRESLPQATPRLHPMGSTWMRGGDELAGSVDKQLLDASVEVARDCAFALDLVAPNLPRWPVPDEMAHLTGLVNARFDARYRGRSEDVKNQARAQIHHELAVIKELGFPGYFLIVDDIVSFCHTNNILCQGRGSAANSVVCFVLGITNVEPISTGLLFERFLSRDREGPPDIDIDIESGRRDAVITYVYDTYGRDNAAQVANVITYRTKAALRDAARALGYPNTSADAWSTNPDEAPNAVRFLAEQLKGQPRHLGIHAGGMVICDRPIADVVPTEWARKHGRSVVQWDKESCASAGLVKFDLLGLGMLEALHHMIDLVVETTGTTINLWEIDLAEPEIYTMLSNGDAVGVFQVESRAQLATLPRLRPREFFDLVVEVALVRPGPIQGGSVHPYIRRRNGLEAVTYEHPILERSLRKTLGVPLFQEQLMHIAVDAAGFSGGEADELRRAMGSRRSVDTMNRMKRRFFAGLRRNNITGDIAGILWNKIVAFVAYGFPESHSQSFASLVYFSAWFKYHHPAEFYVGLLRAQPMGFYSPQSLLADARRKELTILSHNINKSQVEATVENGAIRLGLNMIKGVGKTEAEAIVAHAPYRDIADLSRRAGLGVAVIEALARSGALETLGVGRRQALWQAGAAATEKAAMLPGLSMVSAPSLPGMNAFELIVADIAMTGVSSENPVALLRRQLELRGVIPASELLNCENARRILLAGVVTHRQRPQTAAGVTFLGLEDETGLANVVVSVGLWKRSRAVKVARAVLVRGVVHNADGVASVTADRVEELPFAEMMSAGSRDFR.

The protein belongs to the DNA polymerase type-C family. DnaE2 subfamily.

Its subcellular location is the cytoplasm. The enzyme catalyses DNA(n) + a 2'-deoxyribonucleoside 5'-triphosphate = DNA(n+1) + diphosphate. DNA polymerase involved in damage-induced mutagenesis and translesion synthesis (TLS). It is not the major replicative DNA polymerase. This is Error-prone DNA polymerase from Corynebacterium diphtheriae (strain ATCC 700971 / NCTC 13129 / Biotype gravis).